A 425-amino-acid polypeptide reads, in one-letter code: Kynurenine/alpha-aminoadipate aminotransferase, mitochondrial (425 aa).

The N-terminal 29 residues, 1–29 (MNYARFITAASAARNPSPIRTMTDILSRG), are a transit peptide targeting the mitochondrion. Position 20 (Arg20) interacts with substrate. Lys69 carries the post-translational modification N6-acetyllysine. Tyr74 and Tyr142 together coordinate substrate. N6-acetyllysine is present on Lys179. The tract at residues 181–208 (EDAKNPQKNTPKFLYTVPNGNNPTGNSL) is disordered. Residues 198–208 (PNGNNPTGNSL) show a composition bias toward polar residues. Residue Asn202 coordinates substrate. Lys263 carries the N6-(pyridoxal phosphate)lysine; alternate modification. Lys263, Lys339, and Lys367 each carry N6-acetyllysine; alternate. N6-succinyllysine; alternate occurs at positions 263, 339, and 367. Arg399 contacts substrate. Lys422 bears the N6-acetyllysine mark.

The protein belongs to the class-I pyridoxal-phosphate-dependent aminotransferase family. As to quaternary structure, homodimer. Requires pyridoxal 5'-phosphate as cofactor. Higher expression in the liver. Also found in heart, brain, kidney, pancreas, prostate, testis and ovary.

Its subcellular location is the mitochondrion. It carries out the reaction glycine + 2-oxoglutarate = glyoxylate + L-glutamate. It catalyses the reaction L-kynurenine + 2-oxoglutarate = kynurenate + L-glutamate + H2O. The catalysed reaction is L-kynurenine + glyoxylate = kynurenate + glycine + H2O. The enzyme catalyses 3-hydroxy-L-kynurenine + glyoxylate = xanthurenate + glycine + H2O. It carries out the reaction 2-oxohexanoate + L-kynurenine = L-2-aminohexanoate + kynurenate + H2O. It catalyses the reaction 3-phenylpyruvate + L-kynurenine = kynurenate + L-phenylalanine + H2O. The catalysed reaction is 4-methylsulfanyl-2-oxobutanoate + L-kynurenine = kynurenate + L-methionine + H2O. The enzyme catalyses 2-oxo-3-sulfanylpropanoate + L-kynurenine = kynurenate + L-cysteine + H2O. It carries out the reaction indole-3-pyruvate + L-kynurenine = kynurenate + L-tryptophan + H2O. It catalyses the reaction 2-oxopentanoate + L-kynurenine = L-2-aminopentanoate + kynurenate + H2O. The catalysed reaction is 4-methyl-2-oxopentanoate + L-kynurenine = kynurenate + L-leucine + H2O. The enzyme catalyses L-2-aminoadipate + 2-oxoglutarate = 2-oxoadipate + L-glutamate. It carries out the reaction glyoxylate + L-methionine = 4-methylsulfanyl-2-oxobutanoate + glycine. It catalyses the reaction L-2-aminoadipate + glyoxylate = 2-oxoadipate + glycine. The catalysed reaction is L-tyrosine + glyoxylate = 3-(4-hydroxyphenyl)pyruvate + glycine. The enzyme catalyses glyoxylate + L-phenylalanine = 3-phenylpyruvate + glycine. It carries out the reaction L-tryptophan + glyoxylate = indole-3-pyruvate + glycine. It catalyses the reaction L-leucine + glyoxylate = 4-methyl-2-oxopentanoate + glycine. The catalysed reaction is 2-oxobutanoate + L-kynurenine = (2S)-2-aminobutanoate + kynurenate + H2O. The enzyme catalyses 2-oxoadipate + L-kynurenine = L-2-aminoadipate + kynurenate + H2O. It participates in amino-acid degradation; L-lysine degradation via saccharopine pathway; glutaryl-CoA from L-lysine: step 4/6. Its activity is regulated as follows. Kynurenine transaminase activity is competitively inhibited by aminoadipate, asparagine, glutamate, histidine, cysteine, lysine, 3-hydroxy-kynurenine and phenylalanine. Transaminase with broad substrate specificity. Has transaminase activity towards aminoadipate, kynurenine, methionine and glutamate. Shows activity also towards tryptophan, aspartate and hydroxykynurenine. Accepts a variety of oxo-acids as amino-group acceptors, with a preference for 2-oxoglutarate, 2-oxocaproic acid, phenylpyruvate and alpha-oxo-gamma-methiol butyric acid. Can also use glyoxylate as amino-group acceptor (in vitro). The chain is Kynurenine/alpha-aminoadipate aminotransferase, mitochondrial from Homo sapiens (Human).